The primary structure comprises 138 residues: Small ribosomal subunit protein uS11c (138 aa).

The interval 1-22 is disordered; that stretch reads MAKPIPKIGSRKNARSGSRKHL. Residues 9–22 show a composition bias toward basic residues; sequence GSRKNARSGSRKHL.

Belongs to the universal ribosomal protein uS11 family. Part of the 30S ribosomal subunit.

It is found in the plastid. Its subcellular location is the chloroplast. In Lotus japonicus (Lotus corniculatus var. japonicus), this protein is Small ribosomal subunit protein uS11c.